The sequence spans 481 residues: 6-phosphogluconate dehydrogenase, decarboxylating (481 aa).

Residues 11–16 (GLAVMG), 34–36 (NRT), 76–78 (VKG), and Asn104 contribute to the NADP(+) site. Residues Asn104 and 130–132 (SGG) contribute to the substrate site. The Proton acceptor role is filled by Lys184. Position 187 to 188 (187 to 188 (HN)) interacts with substrate. Glu191 serves as the catalytic Proton donor. Substrate contacts are provided by Tyr192, Lys259, Arg286, Arg445, and His451.

This sequence belongs to the 6-phosphogluconate dehydrogenase family. In terms of assembly, homodimer.

It catalyses the reaction 6-phospho-D-gluconate + NADP(+) = D-ribulose 5-phosphate + CO2 + NADPH. The protein operates within carbohydrate degradation; pentose phosphate pathway; D-ribulose 5-phosphate from D-glucose 6-phosphate (oxidative stage): step 3/3. Its function is as follows. Catalyzes the oxidative decarboxylation of 6-phosphogluconate to ribulose 5-phosphate and CO(2), with concomitant reduction of NADP to NADPH. The protein is 6-phosphogluconate dehydrogenase, decarboxylating (Pgd) of Drosophila simulans (Fruit fly).